Here is a 197-residue protein sequence, read N- to C-terminus: dITP/XTP pyrophosphatase (197 aa).

10 to 15 (SHNGGK) is a substrate binding site. Mg(2+) is bound by residues glutamate 41 and aspartate 70. The Proton acceptor role is filled by aspartate 70. Residues serine 71, 154 to 157 (FGYD), lysine 177, and 182 to 183 (HR) each bind substrate.

Belongs to the HAM1 NTPase family. Homodimer. Mg(2+) is required as a cofactor.

It catalyses the reaction XTP + H2O = XMP + diphosphate + H(+). The catalysed reaction is dITP + H2O = dIMP + diphosphate + H(+). It carries out the reaction ITP + H2O = IMP + diphosphate + H(+). In terms of biological role, pyrophosphatase that catalyzes the hydrolysis of nucleoside triphosphates to their monophosphate derivatives, with a high preference for the non-canonical purine nucleotides XTP (xanthosine triphosphate), dITP (deoxyinosine triphosphate) and ITP. Seems to function as a house-cleaning enzyme that removes non-canonical purine nucleotides from the nucleotide pool, thus preventing their incorporation into DNA/RNA and avoiding chromosomal lesions. In Pseudomonas syringae pv. tomato (strain ATCC BAA-871 / DC3000), this protein is dITP/XTP pyrophosphatase.